The primary structure comprises 379 residues: uncharacterized protein (379 aa).

Belongs to the herpesviridae US22 family.

This is an uncharacterized protein from Human cytomegalovirus (strain AD169) (HHV-5).